Here is a 350-residue protein sequence, read N- to C-terminus: Spermidine/putrescine import ATP-binding protein PotA (350 aa).

In terms of domain architecture, ABC transporter spans 6–236; that stretch reads LELRNISKQY…PENLWTAQFI (231 aa). Residue 38–45 participates in ATP binding; that stretch reads GPSGCGKT.

Belongs to the ABC transporter superfamily. Spermidine/putrescine importer (TC 3.A.1.11.1) family. The complex is composed of two ATP-binding proteins (PotA), two transmembrane proteins (PotB and PotC) and a solute-binding protein (PotD).

The protein resides in the cell membrane. The catalysed reaction is ATP + H2O + polyamine-[polyamine-binding protein]Side 1 = ADP + phosphate + polyamineSide 2 + [polyamine-binding protein]Side 1.. Functionally, part of the ABC transporter complex PotABCD involved in spermidine/putrescine import. Responsible for energy coupling to the transport system. This chain is Spermidine/putrescine import ATP-binding protein PotA, found in Spiroplasma citri.